A 476-amino-acid polypeptide reads, in one-letter code: UDP-N-acetylmuramate--L-alanine ligase (476 aa).

115–121 (GTHGKTT) serves as a coordination point for ATP.

The protein belongs to the MurCDEF family.

Its subcellular location is the cytoplasm. It carries out the reaction UDP-N-acetyl-alpha-D-muramate + L-alanine + ATP = UDP-N-acetyl-alpha-D-muramoyl-L-alanine + ADP + phosphate + H(+). Its pathway is cell wall biogenesis; peptidoglycan biosynthesis. Cell wall formation. This chain is UDP-N-acetylmuramate--L-alanine ligase, found in Paramagnetospirillum magneticum (strain ATCC 700264 / AMB-1) (Magnetospirillum magneticum).